The primary structure comprises 199 residues: MQYPEPISKLIDSYMRLPGIGAKTATRLAFYTIDMNKDDVTAFAKSLVAAKEDLHYCSICGNITDEDPCAICRDKSRDQSTILVVEQPKDVMSIDRAQDYHGLYHVLHGVLSPIEGRGPEDLNIESLLKRLKANKAVKEVIIATNATPEGEATAQYLARLIKPAGIKVTRLAHGLSVGSDIEYADEMTLMKAVEGRTEL.

The C4-type zinc-finger motif lies at 57 to 72 (CSICGNITDEDPCAIC). The region spanning 80-176 (STILVVEQPK…KVTRLAHGLS (97 aa)) is the Toprim domain.

It belongs to the RecR family.

Its function is as follows. May play a role in DNA repair. It seems to be involved in an RecBC-independent recombinational process of DNA repair. It may act with RecF and RecO. This chain is Recombination protein RecR, found in Lacticaseibacillus casei (strain BL23) (Lactobacillus casei).